A 985-amino-acid chain; its full sequence is Disease resistance protein At4g27190 (985 aa).

A coiled-coil region spans residues 24–88; sequence ANAIKFKSNV…ISKARLKLEE (65 aa). Residues 167–429 enclose the NB-ARC domain; sequence IGVWGMGGVG…MAEGFMEELG (263 aa). Residue 171 to 178 coordinates ATP; sequence GMGGVGKT. LRR repeat units lie at residues 502-523, 526-547, 551-572, 575-597, 598-620, and 621-643; these read SLRR…VEEF, KTSV…GFLQ, TLRI…SLLR, SLHS…ETLA, KLEL…EELK, and RFRH…VVSR.

The protein belongs to the disease resistance NB-LRR family.

Its function is as follows. Disease resistance protein. The protein is Disease resistance protein At4g27190 of Arabidopsis thaliana (Mouse-ear cress).